The chain runs to 743 residues: 1,4-alpha-glucan branching enzyme GlgB (743 aa).

Catalysis depends on D423, which acts as the Nucleophile. The Proton donor role is filled by E476.

The protein belongs to the glycosyl hydrolase 13 family. GlgB subfamily. Monomer.

It carries out the reaction Transfers a segment of a (1-&gt;4)-alpha-D-glucan chain to a primary hydroxy group in a similar glucan chain.. It participates in glycan biosynthesis; glycogen biosynthesis. In terms of biological role, catalyzes the formation of the alpha-1,6-glucosidic linkages in glycogen by scission of a 1,4-alpha-linked oligosaccharide from growing alpha-1,4-glucan chains and the subsequent attachment of the oligosaccharide to the alpha-1,6 position. This chain is 1,4-alpha-glucan branching enzyme GlgB, found in Pseudomonas fluorescens (strain ATCC BAA-477 / NRRL B-23932 / Pf-5).